Here is a 275-residue protein sequence, read N- to C-terminus: Penicillin-insensitive murein endopeptidase (275 aa).

Residues 1–19 (MKNWIVGMVALVTMVPVMA) form the signal peptide. 3 disulfide bridges follow: Cys-44–Cys-264, Cys-187–Cys-235, and Cys-216–Cys-223. Positions 110, 113, 120, 147, and 211 each coordinate Zn(2+). The tract at residues 227 to 262 (DTPPPGDGCGAELESWFQPPPPSAKPGKTLPPPLPP) is disordered. The segment covering 244–262 (QPPPPSAKPGKTLPPPLPP) has biased composition (pro residues).

This sequence belongs to the peptidase M74 family. In terms of assembly, dimer. It depends on Zn(2+) as a cofactor.

The protein localises to the periplasm. Murein endopeptidase that cleaves the D-alanyl-meso-2,6-diamino-pimelyl amide bond that connects peptidoglycan strands. Likely plays a role in the removal of murein from the sacculus. This is Penicillin-insensitive murein endopeptidase from Yersinia pestis bv. Antiqua (strain Antiqua).